The sequence spans 329 residues: Lipoyl synthase (329 aa).

Positions 72, 77, 83, 98, 102, 105, and 313 each coordinate [4Fe-4S] cluster. The region spanning 83-303 (CWSHGTATIM…QIGLKKGFFE (221 aa)) is the Radical SAM core domain.

It belongs to the radical SAM superfamily. Lipoyl synthase family. [4Fe-4S] cluster serves as cofactor.

The protein localises to the cytoplasm. It carries out the reaction [[Fe-S] cluster scaffold protein carrying a second [4Fe-4S](2+) cluster] + N(6)-octanoyl-L-lysyl-[protein] + 2 oxidized [2Fe-2S]-[ferredoxin] + 2 S-adenosyl-L-methionine + 4 H(+) = [[Fe-S] cluster scaffold protein] + N(6)-[(R)-dihydrolipoyl]-L-lysyl-[protein] + 4 Fe(3+) + 2 hydrogen sulfide + 2 5'-deoxyadenosine + 2 L-methionine + 2 reduced [2Fe-2S]-[ferredoxin]. Its pathway is protein modification; protein lipoylation via endogenous pathway; protein N(6)-(lipoyl)lysine from octanoyl-[acyl-carrier-protein]: step 2/2. Catalyzes the radical-mediated insertion of two sulfur atoms into the C-6 and C-8 positions of the octanoyl moiety bound to the lipoyl domains of lipoate-dependent enzymes, thereby converting the octanoylated domains into lipoylated derivatives. The polypeptide is Lipoyl synthase (Legionella pneumophila (strain Corby)).